Reading from the N-terminus, the 125-residue chain is Holo-[acyl-carrier-protein] synthase (125 aa).

Residues aspartate 9 and glutamate 58 each contribute to the Mg(2+) site.

This sequence belongs to the P-Pant transferase superfamily. AcpS family. Mg(2+) is required as a cofactor.

It localises to the cytoplasm. It catalyses the reaction apo-[ACP] + CoA = holo-[ACP] + adenosine 3',5'-bisphosphate + H(+). In terms of biological role, transfers the 4'-phosphopantetheine moiety from coenzyme A to a Ser of acyl-carrier-protein. The protein is Holo-[acyl-carrier-protein] synthase of Shewanella amazonensis (strain ATCC BAA-1098 / SB2B).